The chain runs to 176 residues: ATP synthase subunit delta (176 aa).

The protein belongs to the ATPase delta chain family. In terms of assembly, F-type ATPases have 2 components, F(1) - the catalytic core - and F(0) - the membrane proton channel. F(1) has five subunits: alpha(3), beta(3), gamma(1), delta(1), epsilon(1). F(0) has three main subunits: a(1), b(2) and c(10-14). The alpha and beta chains form an alternating ring which encloses part of the gamma chain. F(1) is attached to F(0) by a central stalk formed by the gamma and epsilon chains, while a peripheral stalk is formed by the delta and b chains.

The protein resides in the cell inner membrane. F(1)F(0) ATP synthase produces ATP from ADP in the presence of a proton or sodium gradient. F-type ATPases consist of two structural domains, F(1) containing the extramembraneous catalytic core and F(0) containing the membrane proton channel, linked together by a central stalk and a peripheral stalk. During catalysis, ATP synthesis in the catalytic domain of F(1) is coupled via a rotary mechanism of the central stalk subunits to proton translocation. In terms of biological role, this protein is part of the stalk that links CF(0) to CF(1). It either transmits conformational changes from CF(0) to CF(1) or is implicated in proton conduction. This is ATP synthase subunit delta from Campylobacter hominis (strain ATCC BAA-381 / DSM 21671 / CCUG 45161 / LMG 19568 / NCTC 13146 / CH001A).